A 564-amino-acid chain; its full sequence is Pestheic acid cluster transcriptional regulator 3 (564 aa).

The zn(2)-C6 fungal-type DNA-binding region spans 11–38 (CWTCRLRRKKCDEGKPECTTCQALSITC). A disordered region spans residues 71 to 123 (RTSSRYRVPPGQKANPKLAPKVHAAASTPSTNTSHSTETTPPSDNGFYDTAES). Residues 97–113 (STPSTNTSHSTETTPPS) show a composition bias toward polar residues.

Its subcellular location is the nucleus. Functionally, transcription factor that, with ptaR1 and ptaR2, coregulates the expression of the gene cluster that mediates the biosynthesis of pestheic acid, a diphenyl ether which is a biosynthetic precursor of the unique chloropupukeananes. The protein is Pestheic acid cluster transcriptional regulator 3 of Pestalotiopsis fici (strain W106-1 / CGMCC3.15140).